A 164-amino-acid chain; its full sequence is Large ribosomal subunit protein uL10 (164 aa).

This sequence belongs to the universal ribosomal protein uL10 family. Part of the ribosomal stalk of the 50S ribosomal subunit. The N-terminus interacts with L11 and the large rRNA to form the base of the stalk. The C-terminus forms an elongated spine to which L12 dimers bind in a sequential fashion forming a multimeric L10(L12)X complex.

In terms of biological role, forms part of the ribosomal stalk, playing a central role in the interaction of the ribosome with GTP-bound translation factors. The polypeptide is Large ribosomal subunit protein uL10 (Photobacterium profundum (strain SS9)).